A 217-amino-acid chain; its full sequence is Large ribosomal subunit protein uL3 (217 aa).

A disordered region spans residues 135–154 (ATHGNSLSHRAPGSIGQCQT). Gln-153 carries the post-translational modification N5-methylglutamine.

This sequence belongs to the universal ribosomal protein uL3 family. Part of the 50S ribosomal subunit. Forms a cluster with proteins L14 and L19. Post-translationally, methylated by PrmB.

Functionally, one of the primary rRNA binding proteins, it binds directly near the 3'-end of the 23S rRNA, where it nucleates assembly of the 50S subunit. The polypeptide is Large ribosomal subunit protein uL3 (Coxiella burnetii (strain CbuG_Q212) (Coxiella burnetii (strain Q212))).